A 121-amino-acid chain; its full sequence is CRISPR system Cms protein Csm2 (121 aa).

The protein belongs to the CRISPR-associated Csm2 family. As to quaternary structure, part of the Csm effector complex that includes at least Cas10(1), Csm2(3), Csm3(5), Csm4(1), Csm5(1) and mature crRNA. The Csm complex is elongated and slightly twisted with a maximal length of 215 Angstroms and a diameter of 75-80 Angstroms. It has been modeled to have a central protein filamant of Csm3 subunits along which the dsRNA helix of paired crRNA and target RNA binds. The filament is capped at one end by Cas10 and Csm4 and at the other end by Csm5; ssDNA is thought to bind to the N-terminal HD domain of Cas10. Csm with a precursor crRNA does not include Csm5, while Cas6, the enzyme probably involved in pre-crRNA processing, is found associated with a subset of the Csm complex.

Its function is as follows. CRISPR (clustered regularly interspaced short palindromic repeat) is an adaptive immune system that provides protection against mobile genetic elements (viruses, transposable elements and conjugative plasmids). CRISPR clusters contain spacers, sequences complementary to antecedent mobile elements, and target invading nucleic acids. CRISPR clusters are transcribed and processed into CRISPR RNA (crRNA). The type III-A Csm effector complex binds crRNA and acts as a crRNA-guided RNase, DNase and cyclic oligoadenylate synthase; binding of target RNA cognate to the crRNA is required for all activities. In a heterologous host this Csm effector complex restricts ssRNA phage MS2, suggesting it may target RNA viruses in vivo. Functionally, csm functions as a non-specific ssDNase. Base-pairing between crRNA and target RNA to form a ternary Csm complex activates a ssDNase activity; target RNA cleavage suppresses the ssDNase, a temporal control that prevents uncontrolled DNA degradation. Viral RNA transcripts probably tether the Csm complex to the viral genome, recruiting Cas10 ssDNA activity which is able to degrade DNA in the transcription bubble, spatially controlling the DNase activity. This subunit may be involved in monitoring complementarity of crRNA and target RNA. The polypeptide is CRISPR system Cms protein Csm2 (Streptococcus thermophilus).